Reading from the N-terminus, the 595-residue chain is Elongation factor 4 2 (595 aa).

In terms of domain architecture, tr-type G spans 4–187 (SHIRNFAIIA…AIKQRLPAPQ (184 aa)). GTP contacts are provided by residues 16–21 (DHGKST) and 133–136 (NKVD).

The protein belongs to the TRAFAC class translation factor GTPase superfamily. Classic translation factor GTPase family. LepA subfamily.

It localises to the cell membrane. The catalysed reaction is GTP + H2O = GDP + phosphate + H(+). Its function is as follows. Required for accurate and efficient protein synthesis under certain stress conditions. May act as a fidelity factor of the translation reaction, by catalyzing a one-codon backward translocation of tRNAs on improperly translocated ribosomes. Back-translocation proceeds from a post-translocation (POST) complex to a pre-translocation (PRE) complex, thus giving elongation factor G a second chance to translocate the tRNAs correctly. Binds to ribosomes in a GTP-dependent manner. The sequence is that of Elongation factor 4 2 from Lactiplantibacillus plantarum (strain ATCC BAA-793 / NCIMB 8826 / WCFS1) (Lactobacillus plantarum).